The sequence spans 231 residues: 7-cyano-7-deazaguanine synthase (231 aa).

8–18 (FSGGQDSTTCL) serves as a coordination point for ATP. Residues Cys188, Cys197, Cys200, and Cys203 each contribute to the Zn(2+) site.

It belongs to the QueC family. It depends on Zn(2+) as a cofactor.

The catalysed reaction is 7-carboxy-7-deazaguanine + NH4(+) + ATP = 7-cyano-7-deazaguanine + ADP + phosphate + H2O + H(+). It participates in purine metabolism; 7-cyano-7-deazaguanine biosynthesis. Catalyzes the ATP-dependent conversion of 7-carboxy-7-deazaguanine (CDG) to 7-cyano-7-deazaguanine (preQ(0)). The chain is 7-cyano-7-deazaguanine synthase from Salmonella newport (strain SL254).